Reading from the N-terminus, the 236-residue chain is Small ribosomal subunit protein uS3 (236 aa).

A KH type-2 domain is found at Val39–Arg107.

It belongs to the universal ribosomal protein uS3 family. Part of the 30S ribosomal subunit. Forms a tight complex with proteins S10 and S14.

Its function is as follows. Binds the lower part of the 30S subunit head. Binds mRNA in the 70S ribosome, positioning it for translation. In Aeromonas salmonicida (strain A449), this protein is Small ribosomal subunit protein uS3.